The primary structure comprises 216 residues: Uracil phosphoribosyltransferase (216 aa).

GTP is bound by residues Arg-30, Arg-39, 73-76, and Lys-75; that span reads ASKI. Arg-83 is a 5-phospho-alpha-D-ribose 1-diphosphate binding site. Residue Lys-100 coordinates GTP. Arg-108 contributes to the 5-phospho-alpha-D-ribose 1-diphosphate binding site. Arg-129 lines the GTP pocket. 5-phospho-alpha-D-ribose 1-diphosphate contacts are provided by residues Asp-135 and 135 to 143; that span reads DPMLATGGT. D-ribose 5-phosphate is bound at residue Tyr-199. Residues Ile-200 and 205–207 contribute to the uracil site; that span reads GDF. Asp-206 contacts 5-phospho-alpha-D-ribose 1-diphosphate.

This sequence belongs to the UPRTase family. The cofactor is Mg(2+).

It carries out the reaction UMP + diphosphate = 5-phospho-alpha-D-ribose 1-diphosphate + uracil. Its pathway is pyrimidine metabolism; UMP biosynthesis via salvage pathway; UMP from uracil: step 1/1. With respect to regulation, allosterically activated by GTP. In terms of biological role, catalyzes the conversion of uracil and 5-phospho-alpha-D-ribose 1-diphosphate (PRPP) to UMP and diphosphate. In Dictyostelium discoideum (Social amoeba), this protein is Uracil phosphoribosyltransferase (uprt).